We begin with the raw amino-acid sequence, 603 residues long: Myotubularin (603 aa).

Polar residues predominate over residues 1 to 13 (MASASTSKYNSHS). Residues 1–25 (MASASTSKYNSHSLENESIKRTSRD) are disordered. Ser13 and Ser18 each carry phosphoserine. The span at 14–25 (LENESIKRTSRD) shows a compositional bias: basic and acidic residues. A GRAM domain is found at 29 to 97 (RDLTEAVPRL…GVISRIEKMG (69 aa)). The Myotubularin phosphatase domain maps to 163 to 538 (GWTVYNPVEE…RHLELWVNYY (376 aa)). A 1,2-diacyl-sn-glycero-3-phospho-(1D-myo-inositol-3,5-bisphosphate) contacts are provided by Asn288, Asn313, and Ile314. Positions 288, 313, and 314 each coordinate a 1,2-diacyl-sn-glycero-3-phospho-(1D-myo-inositol-3-phosphate). Cys375 functions as the Phosphocysteine intermediate in the catalytic mechanism. Residues Ser376, Asp377, Gly378, Trp379, Asp380, Arg381, Lys417, and Arg421 each coordinate a 1,2-diacyl-sn-glycero-3-phospho-(1D-myo-inositol-3,5-bisphosphate). 6 residues coordinate a 1,2-diacyl-sn-glycero-3-phospho-(1D-myo-inositol-3-phosphate): Ser376, Asp377, Gly378, Trp379, Asp380, and Arg381. A 1,2-diacyl-sn-glycero-3-phospho-(1D-myo-inositol-3-phosphate) is bound at residue Arg421. Position 495 is a phosphothreonine (Thr495). The segment at 579–603 (SAKLSDPPTSPSSPSQMMPHVQTHF) is disordered. Position 588 is a phosphoserine (Ser588).

It belongs to the protein-tyrosine phosphatase family. Non-receptor class myotubularin subfamily. In terms of assembly, heterodimer with MTMR12. Interacts with KMT2A/MLL1 (via SET domain). Interacts with DES in skeletal muscle but not in cardiac muscle. Interacts with SPEG.

It localises to the cytoplasm. Its subcellular location is the cell membrane. The protein resides in the cell projection. The protein localises to the filopodium. It is found in the ruffle. It localises to the late endosome. Its subcellular location is the myofibril. The protein resides in the sarcomere. The catalysed reaction is a 1,2-diacyl-sn-glycero-3-phospho-(1D-myo-inositol-3-phosphate) + H2O = a 1,2-diacyl-sn-glycero-3-phospho-(1D-myo-inositol) + phosphate. It carries out the reaction a 1,2-diacyl-sn-glycero-3-phospho-(1D-myo-inositol-3,5-bisphosphate) + H2O = a 1,2-diacyl-sn-glycero-3-phospho-(1D-myo-inositol-5-phosphate) + phosphate. It catalyses the reaction 1,2-dioctanoyl-sn-glycero-3-phospho-(1-D-myo-inositol-3-phosphate) + H2O = 1,2-dioctanoyl-sn-glycero-3-phospho-(1D-myo-inositol) + phosphate. The enzyme catalyses 1,2-dioctanoyl-sn-glycero-3-phospho-(1D-myo-inositol-3,5-bisphosphate) + H2O = 1,2-dioctanoyl-sn-glycero-3-phospho-(1D-myo-inositol-5-phosphate) + phosphate. The catalysed reaction is 1,2-dihexadecanoyl-sn-glycero-3-phospho-(1D-myo-inositol-3,5-phosphate) + H2O = 1,2-dihexadecanoyl-sn-glycero-3-phospho-(1D-myo-inositol-5-phosphate) + phosphate. Allosterically activated by phosphatidylinositol 5-phosphate (PI5P). Functionally, lipid phosphatase which dephosphorylates phosphatidylinositol 3-monophosphate (PI3P) and phosphatidylinositol 3,5-bisphosphate (PI(3,5)P2). Has also been shown to dephosphorylate phosphotyrosine- and phosphoserine-containing peptides. Negatively regulates EGFR degradation through regulation of EGFR trafficking from the late endosome to the lysosome. Plays a role in vacuolar formation and morphology. Regulates desmin intermediate filament assembly and architecture. Plays a role in mitochondrial morphology and positioning. Required for skeletal muscle maintenance but not for myogenesis. In skeletal muscles, stabilizes MTMR12 protein levels. The sequence is that of Myotubularin from Homo sapiens (Human).